Reading from the N-terminus, the 322-residue chain is Ribosomal RNA small subunit methyltransferase H (322 aa).

S-adenosyl-L-methionine contacts are provided by residues 35–37, Asp-52, Phe-79, Asp-100, and Gln-107; that span reads GGY. The segment at 254–322 is disordered; the sequence is GATPAGSRHL…TAPKKEGRQG (69 aa). The span at 295 to 309 shows a compositional bias: low complexity; the sequence is SRSATLRVARRTAAA.

The protein belongs to the methyltransferase superfamily. RsmH family.

Its subcellular location is the cytoplasm. It carries out the reaction cytidine(1402) in 16S rRNA + S-adenosyl-L-methionine = N(4)-methylcytidine(1402) in 16S rRNA + S-adenosyl-L-homocysteine + H(+). In terms of biological role, specifically methylates the N4 position of cytidine in position 1402 (C1402) of 16S rRNA. In Rhizorhabdus wittichii (strain DSM 6014 / CCUG 31198 / JCM 15750 / NBRC 105917 / EY 4224 / RW1) (Sphingomonas wittichii), this protein is Ribosomal RNA small subunit methyltransferase H.